We begin with the raw amino-acid sequence, 244 residues long: Phosphoadenosine 5'-phosphosulfate reductase (244 aa).

The active-site Nucleophile; cysteine thiosulfonate intermediate is the Cys239.

Belongs to the PAPS reductase family. CysH subfamily.

It is found in the cytoplasm. The enzyme catalyses [thioredoxin]-disulfide + sulfite + adenosine 3',5'-bisphosphate + 2 H(+) = [thioredoxin]-dithiol + 3'-phosphoadenylyl sulfate. It functions in the pathway sulfur metabolism; hydrogen sulfide biosynthesis; sulfite from sulfate: step 3/3. Catalyzes the formation of sulfite from phosphoadenosine 5'-phosphosulfate (PAPS) using thioredoxin as an electron donor. The sequence is that of Phosphoadenosine 5'-phosphosulfate reductase from Zymomonas mobilis subsp. mobilis (strain ATCC 31821 / ZM4 / CP4).